A 453-amino-acid chain; its full sequence is Ribosomal protein uS12 methylthiotransferase RimO (453 aa).

Residues 5-120 (PKVGFVSLGC…VMQAVHSHLP (116 aa)) form the MTTase N-terminal domain. Cysteine 14, cysteine 50, cysteine 79, cysteine 151, cysteine 155, and cysteine 158 together coordinate [4Fe-4S] cluster. In terms of domain architecture, Radical SAM core spans 137-382 (LTPRHYAYLK…MEVAEEVSAR (246 aa)). One can recognise a TRAM domain in the interval 385–453 (QRKVGKTLKV…ADGHDLWGEV (69 aa)).

This sequence belongs to the methylthiotransferase family. RimO subfamily. [4Fe-4S] cluster is required as a cofactor.

The protein localises to the cytoplasm. It catalyses the reaction L-aspartate(89)-[ribosomal protein uS12]-hydrogen + (sulfur carrier)-SH + AH2 + 2 S-adenosyl-L-methionine = 3-methylsulfanyl-L-aspartate(89)-[ribosomal protein uS12]-hydrogen + (sulfur carrier)-H + 5'-deoxyadenosine + L-methionine + A + S-adenosyl-L-homocysteine + 2 H(+). Its function is as follows. Catalyzes the methylthiolation of an aspartic acid residue of ribosomal protein uS12. This Burkholderia vietnamiensis (strain G4 / LMG 22486) (Burkholderia cepacia (strain R1808)) protein is Ribosomal protein uS12 methylthiotransferase RimO.